The primary structure comprises 285 residues: MKFVIVTGLSGSGKSETMRALEDMGFYCVDNLPPALITKFAELCYQPNSSIDKVALGIDIRGRKFFEALHESLNYLEKENYEYEMVYLDCNDDVLLKRYKMTRRNHPLAKDMQIPEGIKMERKIMEPLKELSTCIIDTTNMKPKDLKEEIKKIYSSGEDNPNLTISVVSFGFKHGILADADLVFDVRFLPNPYYVEELRAKTGDDKEVRDYVMNSKISEEFYVKLLDMIHFLVPQYIEEGKQHLVIGVGCTGGRHRSVTITNLIAEDLSNKGYRVVKKHRDSMLR.

Residue 8–15 participates in ATP binding; sequence GLSGSGKS. 59–62 provides a ligand contact to GTP; it reads DIRG.

It belongs to the RapZ-like family.

In terms of biological role, displays ATPase and GTPase activities. In Clostridioides difficile (strain 630) (Peptoclostridium difficile), this protein is Nucleotide-binding protein CD630_34000.